The chain runs to 123 residues: Diacylglycerol kinase (123 aa).

The chain crosses the membrane as a helical span at residues 15 to 32 (ILNATGYSLAGFLAAFRG). Position 33 (Glu-33) interacts with a divalent metal cation. The next 3 helical transmembrane spans lie at 35–55 (AFRQ…LLDV), 61–81 (ALMI…SAIE), and 102–122 (GSAA…TILL). The active-site Proton acceptor is Glu-74. Residue Glu-81 coordinates a divalent metal cation.

Belongs to the bacterial diacylglycerol kinase family. The cofactor is Mg(2+).

It is found in the cell inner membrane. The catalysed reaction is a 1,2-diacyl-sn-glycerol + ATP = a 1,2-diacyl-sn-glycero-3-phosphate + ADP + H(+). Functionally, catalyzes the ATP-dependent phosphorylation of sn-l,2-diacylglycerol (DAG) to phosphatidic acid. Involved in the recycling of diacylglycerol produced as a by-product during membrane-derived oligosaccharide (MDO) biosynthesis. This Pseudomonas aeruginosa (strain ATCC 15692 / DSM 22644 / CIP 104116 / JCM 14847 / LMG 12228 / 1C / PRS 101 / PAO1) protein is Diacylglycerol kinase (dgkA).